Reading from the N-terminus, the 286-residue chain is tRNA (guanine-N(7)-)-methyltransferase (286 aa).

S-adenosyl-L-methionine-binding positions include glycine 103, 126-127, 161-162, and cysteine 181; these read EI and NA. Residue aspartate 184 is part of the active site. Position 259-261 (259-261) interacts with S-adenosyl-L-methionine; sequence TEE.

Belongs to the class I-like SAM-binding methyltransferase superfamily. TrmB family. As to quaternary structure, forms a complex with TRM82.

It localises to the nucleus. It carries out the reaction guanosine(46) in tRNA + S-adenosyl-L-methionine = N(7)-methylguanosine(46) in tRNA + S-adenosyl-L-homocysteine. Its pathway is tRNA modification; N(7)-methylguanine-tRNA biosynthesis. Functionally, catalyzes the formation of N(7)-methylguanine at position 46 (m7G46) in tRNA. In Vanderwaltozyma polyspora (strain ATCC 22028 / DSM 70294 / BCRC 21397 / CBS 2163 / NBRC 10782 / NRRL Y-8283 / UCD 57-17) (Kluyveromyces polysporus), this protein is tRNA (guanine-N(7)-)-methyltransferase.